A 265-amino-acid polypeptide reads, in one-letter code: tRNA pseudouridine synthase A (265 aa).

Residue D55 is the Nucleophile of the active site. Y113 is a substrate binding site.

This sequence belongs to the tRNA pseudouridine synthase TruA family. As to quaternary structure, homodimer.

It carries out the reaction uridine(38/39/40) in tRNA = pseudouridine(38/39/40) in tRNA. In terms of biological role, formation of pseudouridine at positions 38, 39 and 40 in the anticodon stem and loop of transfer RNAs. This is tRNA pseudouridine synthase A from Levilactobacillus brevis (strain ATCC 367 / BCRC 12310 / CIP 105137 / JCM 1170 / LMG 11437 / NCIMB 947 / NCTC 947) (Lactobacillus brevis).